We begin with the raw amino-acid sequence, 182 residues long: UPF0397 protein BT9727_2423 (182 aa).

Helical transmembrane passes span Val9 to Ile29, Ala40 to Ile60, Trp71 to Ile91, Ile114 to Val134, and Ile142 to Leu162.

Belongs to the UPF0397 family.

Its subcellular location is the cell membrane. In Bacillus thuringiensis subsp. konkukian (strain 97-27), this protein is UPF0397 protein BT9727_2423.